The primary structure comprises 526 residues: Bifunctional purine biosynthesis protein PurH (526 aa).

One can recognise an MGS-like domain in the interval 1 to 148; it reads MQRPIIIRRA…KNYSNVVVVV (148 aa).

Belongs to the PurH family.

The catalysed reaction is (6R)-10-formyltetrahydrofolate + 5-amino-1-(5-phospho-beta-D-ribosyl)imidazole-4-carboxamide = 5-formamido-1-(5-phospho-D-ribosyl)imidazole-4-carboxamide + (6S)-5,6,7,8-tetrahydrofolate. It catalyses the reaction IMP + H2O = 5-formamido-1-(5-phospho-D-ribosyl)imidazole-4-carboxamide. It functions in the pathway purine metabolism; IMP biosynthesis via de novo pathway; 5-formamido-1-(5-phospho-D-ribosyl)imidazole-4-carboxamide from 5-amino-1-(5-phospho-D-ribosyl)imidazole-4-carboxamide (10-formyl THF route): step 1/1. Its pathway is purine metabolism; IMP biosynthesis via de novo pathway; IMP from 5-formamido-1-(5-phospho-D-ribosyl)imidazole-4-carboxamide: step 1/1. The sequence is that of Bifunctional purine biosynthesis protein PurH from Baumannia cicadellinicola subsp. Homalodisca coagulata.